Consider the following 95-residue polypeptide: Integration host factor subunit beta (95 aa).

Residues 56–76 (RAPRTGRNPKTGTSVDLDGKY) are disordered.

The protein belongs to the bacterial histone-like protein family. Heterodimer of an alpha and a beta chain.

Its function is as follows. This protein is one of the two subunits of integration host factor, a specific DNA-binding protein that functions in genetic recombination as well as in transcriptional and translational control. The sequence is that of Integration host factor subunit beta from Shewanella sediminis (strain HAW-EB3).